We begin with the raw amino-acid sequence, 202 residues long: Cyclin-U4-1 (202 aa).

This sequence belongs to the cyclin family. Cyclin U/P subfamily. As to quaternary structure, interacts with CDKA-1. As to expression, expressed in roots, stems and flowers. Expressed in the shoot apex, leaf primordia and young leaves.

The polypeptide is Cyclin-U4-1 (CYCU4-1) (Arabidopsis thaliana (Mouse-ear cress)).